The following is a 107-amino-acid chain: U1-lycotoxin-Ls1b (107 aa).

The signal sequence occupies residues 1–20 (MMKVLVVVALLVTLISYSSS). Residues 21-41 (EGIDDLEADELLSLMADEQTR) constitute a propeptide that is removed on maturation. Intrachain disulfides connect C44–C59, C51–C68, C58–C86, and C70–C84.

This sequence belongs to the neurotoxin 19 (CSTX) family. 04 (U1-Lctx) subfamily. Expressed by the venom gland.

Its subcellular location is the secreted. This is U1-lycotoxin-Ls1b from Lycosa singoriensis (Wolf spider).